We begin with the raw amino-acid sequence, 267 residues long: GTP cyclohydrolase FolE2 (267 aa).

The protein belongs to the GTP cyclohydrolase IV family.

The catalysed reaction is GTP + H2O = 7,8-dihydroneopterin 3'-triphosphate + formate + H(+). It participates in cofactor biosynthesis; 7,8-dihydroneopterin triphosphate biosynthesis; 7,8-dihydroneopterin triphosphate from GTP: step 1/1. Functionally, converts GTP to 7,8-dihydroneopterin triphosphate. The chain is GTP cyclohydrolase FolE2 from Nitrosomonas eutropha (strain DSM 101675 / C91 / Nm57).